A 298-amino-acid polypeptide reads, in one-letter code: Ketohexokinase (298 aa).

Residues D15, G41, N42, and N45 each coordinate beta-D-fructose. ATP-binding positions include R108, 226–229 (AEEG), and 255–258 (GAGD). D258 provides a ligand contact to beta-D-fructose.

Belongs to the carbohydrate kinase PfkB family. In terms of assembly, homodimer.

It carries out the reaction beta-D-fructose + ATP = beta-D-fructose 1-phosphate + ADP + H(+). It participates in carbohydrate metabolism; fructose metabolism. Requires potassium. Inhibition by ADP. In terms of biological role, catalyzes the phosphorylation of the ketose sugar fructose to fructose-1-phosphate. This chain is Ketohexokinase, found in Mus musculus (Mouse).